Reading from the N-terminus, the 202-residue chain is Outer-membrane lipoprotein carrier protein (202 aa).

Positions 1-18 are cleaved as a signal peptide; that stretch reads MNKLFLILLLIFSHEVFS.

The protein belongs to the LolA family. In terms of assembly, monomer.

It is found in the periplasm. Participates in the translocation of lipoproteins from the inner membrane to the outer membrane. Only forms a complex with a lipoprotein if the residue after the N-terminal Cys is not an aspartate (The Asp acts as a targeting signal to indicate that the lipoprotein should stay in the inner membrane). This is Outer-membrane lipoprotein carrier protein from Legionella pneumophila (strain Paris).